A 628-amino-acid chain; its full sequence is tRNA 5-methylaminomethyl-2-thiouridine biosynthesis bifunctional protein MnmC (628 aa).

Residues 1–237 form a tRNA (mnm(5)s(2)U34)-methyltransferase region; that stretch reads MSSYSPLVPP…KWHMTVGVRE (237 aa). The tract at residues 265–628 is FAD-dependent cmnm(5)s(2)U34 oxidoreductase; sequence VGGGLAGAGI…ADLLAAVAPR (364 aa).

The protein in the N-terminal section; belongs to the methyltransferase superfamily. tRNA (mnm(5)s(2)U34)-methyltransferase family. This sequence in the C-terminal section; belongs to the DAO family. FAD serves as cofactor.

It is found in the cytoplasm. It carries out the reaction 5-aminomethyl-2-thiouridine(34) in tRNA + S-adenosyl-L-methionine = 5-methylaminomethyl-2-thiouridine(34) in tRNA + S-adenosyl-L-homocysteine + H(+). Functionally, catalyzes the last two steps in the biosynthesis of 5-methylaminomethyl-2-thiouridine (mnm(5)s(2)U) at the wobble position (U34) in tRNA. Catalyzes the FAD-dependent demodification of cmnm(5)s(2)U34 to nm(5)s(2)U34, followed by the transfer of a methyl group from S-adenosyl-L-methionine to nm(5)s(2)U34, to form mnm(5)s(2)U34. In Bordetella petrii (strain ATCC BAA-461 / DSM 12804 / CCUG 43448), this protein is tRNA 5-methylaminomethyl-2-thiouridine biosynthesis bifunctional protein MnmC.